A 422-amino-acid chain; its full sequence is Trigger factor (422 aa).

Positions 158–242 (GDFAVVSLES…VKGLRKKELP (85 aa)) constitute a PPIase FKBP-type domain.

It belongs to the FKBP-type PPIase family. Tig subfamily.

The protein localises to the cytoplasm. The enzyme catalyses [protein]-peptidylproline (omega=180) = [protein]-peptidylproline (omega=0). Involved in protein export. Acts as a chaperone by maintaining the newly synthesized protein in an open conformation. Functions as a peptidyl-prolyl cis-trans isomerase. The protein is Trigger factor of Solibacter usitatus (strain Ellin6076).